The sequence spans 77 residues: U14-theraphotoxin-Cg1b (77 aa).

The first 21 residues, 1 to 21 (MKTSVLLVILGIAAITVQCTA), serve as a signal peptide directing secretion. A propeptide spanning residues 22–49 (SESVEQDSLRTFVDAVLGWNAEMASEAR) is cleaved from the precursor. 3 disulfide bridges follow: cysteine 50–cysteine 64, cysteine 57–cysteine 69, and cysteine 63–cysteine 75.

The protein belongs to the neurotoxin 10 (Hwtx-1) family. 65 (Jztx-21) subfamily. As to expression, expressed by the venom gland.

Its subcellular location is the secreted. Its function is as follows. Probable ion channel inhibitor. The chain is U14-theraphotoxin-Cg1b from Chilobrachys guangxiensis (Chinese earth tiger tarantula).